We begin with the raw amino-acid sequence, 237 residues long: Dihydroceramide fatty acyl 2-hydroxylase FAH2 (237 aa).

Transmembrane regions (helical) follow at residues valine 54–alanine 74 and glycine 77–leucine 97. 5 residues coordinate Zn(2+): histidine 102, histidine 107, histidine 123, histidine 126, and histidine 127. 2 helical membrane-spanning segments follow: residues leucine 134–leucine 154 and leucine 156–methionine 176. Positions 181, 185, 201, 204, and 205 each coordinate Zn(2+).

The protein belongs to the sterol desaturase family. As to quaternary structure, interacts with CYTB5-A, CYTB5-B, CYTB5-C and CYTB5-D. It depends on Zn(2+) as a cofactor. In terms of tissue distribution, expressed in leaves, roots, flowers and seeds.

It localises to the endoplasmic reticulum membrane. The enzyme catalyses an N-(1,2-saturated acyl)sphinganine + 2 Fe(II)-[cytochrome b5] + O2 + 2 H(+) = an N-[(2'R)-hydroxyacyl]sphinganine + 2 Fe(III)-[cytochrome b5] + H2O. Functionally, fatty acid 2-hydroxylase involved in the alpha-hydroxylation of the long-chain fatty acid (LCFA) palmitic acid. Probably involved in the resistance response to oxidative stress. This chain is Dihydroceramide fatty acyl 2-hydroxylase FAH2, found in Arabidopsis thaliana (Mouse-ear cress).